Here is an 83-residue protein sequence, read N- to C-terminus: Small ribosomal subunit protein bS16 (83 aa).

Belongs to the bacterial ribosomal protein bS16 family.

The chain is Small ribosomal subunit protein bS16 from Stutzerimonas stutzeri (strain A1501) (Pseudomonas stutzeri).